Here is a 285-residue protein sequence, read N- to C-terminus: K88 fimbrial protein AD (285 aa).

Positions 1–21 (MKKTLIALAIAASAASGMAHA) are cleaved as a signal peptide.

It belongs to the fimbrial K88 protein family. As to quaternary structure, K88 fimbria, 0.1-1 micrometer in length and 7 nanometers in diameter, is composed of about 100 identical subunits.

Its subcellular location is the fimbrium. Its function is as follows. K88 major fimbrial subunit. Fimbriae (also called pili), are polar filaments radiating from the surface of the bacterium to a length of 0.5-1.5 micrometers and numbering 100-300 per cell. They enable bacteria to colonize the epithelium of specific host organs. In Escherichia coli, this protein is K88 fimbrial protein AD (faeG).